The primary structure comprises 193 residues: Peptidyl-tRNA hydrolase (193 aa).

Tyr16 lines the tRNA pocket. The Proton acceptor role is filled by His21. TRNA contacts are provided by Phe67, Asn69, and Asn115.

This sequence belongs to the PTH family. Monomer.

It localises to the cytoplasm. It carries out the reaction an N-acyl-L-alpha-aminoacyl-tRNA + H2O = an N-acyl-L-amino acid + a tRNA + H(+). Its function is as follows. Hydrolyzes ribosome-free peptidyl-tRNAs (with 1 or more amino acids incorporated), which drop off the ribosome during protein synthesis, or as a result of ribosome stalling. Catalyzes the release of premature peptidyl moieties from peptidyl-tRNA molecules trapped in stalled 50S ribosomal subunits, and thus maintains levels of free tRNAs and 50S ribosomes. This is Peptidyl-tRNA hydrolase from Psychrobacter arcticus (strain DSM 17307 / VKM B-2377 / 273-4).